The primary structure comprises 237 residues: Neurogenin-1 (237 aa).

Positions 35–83 (LQQAASASGPPAPARRGAPNISRASEVPGAQDDEQERRRRRGRTRVRSE) are disordered. Over residues 38–53 (AASASGPPAPARRGAP) the composition is skewed to low complexity. The bHLH domain maps to 92 to 144 (SRRVKANDRERNRMHNLNAALDALRSVLPSFPDDTKLTKIETLRFAYNYIWAL). Residues 175–209 (GPPSPASDAESWGSGAAAASPLSDPSSPAASEDFT) are disordered. Low complexity predominate over residues 180-207 (ASDAESWGSGAAAASPLSDPSSPAASED).

Efficient DNA binding requires dimerization with another bHLH protein. As to expression, expression restricted to the embryonic nervous system.

Its subcellular location is the nucleus. Acts as a transcriptional regulator. Involved in the initiation of neuronal differentiation. Activates transcription by binding to the E box (5'-CANNTG-3'). Associates with chromatin to enhancer regulatory elements in genes encoding key transcriptional regulators of neurogenesis. In Homo sapiens (Human), this protein is Neurogenin-1 (NEUROG1).